A 246-amino-acid polypeptide reads, in one-letter code: Ribonuclease 3 (246 aa).

The region spanning 18-147 is the RNase III domain; the sequence is FQELQNKIGI…FIGALYLDQG (130 aa). Glu-60 is a Mg(2+) binding site. The active site involves Asp-64. Positions 133 and 136 each coordinate Mg(2+). Residue Glu-136 is part of the active site. One can recognise a DRBM domain in the interval 173 to 242; it reads DFKSQLQELV…AQMALETLRA (70 aa).

Belongs to the ribonuclease III family. As to quaternary structure, homodimer. Mg(2+) serves as cofactor.

The protein localises to the cytoplasm. The catalysed reaction is Endonucleolytic cleavage to 5'-phosphomonoester.. In terms of biological role, digests double-stranded RNA. Involved in the processing of primary rRNA transcript to yield the immediate precursors to the large and small rRNAs (23S and 16S). Processes some mRNAs, and tRNAs when they are encoded in the rRNA operon. Processes pre-crRNA and tracrRNA of type II CRISPR loci if present in the organism. This is Ribonuclease 3 from Geobacillus kaustophilus (strain HTA426).